Consider the following 2298-residue polypeptide: Protein Ycf2 (2298 aa).

1638 to 1645 (GSIGTGRS) contacts ATP.

The protein belongs to the Ycf2 family.

It is found in the plastid. The protein resides in the chloroplast stroma. Functionally, probable ATPase of unknown function. Its presence in a non-photosynthetic plant (Epifagus virginiana) and experiments in tobacco indicate that it has an essential function which is probably not related to photosynthesis. This is Protein Ycf2 from Gossypium barbadense (Sea Island cotton).